A 214-amino-acid polypeptide reads, in one-letter code: Phosphatidylserine decarboxylase proenzyme (214 aa).

Serine 182 (schiff-base intermediate with substrate; via pyruvic acid) is an active-site residue. The residue at position 182 (serine 182) is a Pyruvic acid (Ser); by autocatalysis.

It belongs to the phosphatidylserine decarboxylase family. PSD-A subfamily. As to quaternary structure, heterodimer of a large membrane-associated beta subunit and a small pyruvoyl-containing alpha subunit. It depends on pyruvate as a cofactor. In terms of processing, is synthesized initially as an inactive proenzyme. Formation of the active enzyme involves a self-maturation process in which the active site pyruvoyl group is generated from an internal serine residue via an autocatalytic post-translational modification. Two non-identical subunits are generated from the proenzyme in this reaction, and the pyruvate is formed at the N-terminus of the alpha chain, which is derived from the carboxyl end of the proenzyme. The post-translation cleavage follows an unusual pathway, termed non-hydrolytic serinolysis, in which the side chain hydroxyl group of the serine supplies its oxygen atom to form the C-terminus of the beta chain, while the remainder of the serine residue undergoes an oxidative deamination to produce ammonia and the pyruvoyl prosthetic group on the alpha chain.

The protein resides in the cell membrane. The enzyme catalyses a 1,2-diacyl-sn-glycero-3-phospho-L-serine + H(+) = a 1,2-diacyl-sn-glycero-3-phosphoethanolamine + CO2. It participates in phospholipid metabolism; phosphatidylethanolamine biosynthesis; phosphatidylethanolamine from CDP-diacylglycerol: step 2/2. In terms of biological role, catalyzes the formation of phosphatidylethanolamine (PtdEtn) from phosphatidylserine (PtdSer). In Burkholderia vietnamiensis (strain G4 / LMG 22486) (Burkholderia cepacia (strain R1808)), this protein is Phosphatidylserine decarboxylase proenzyme.